We begin with the raw amino-acid sequence, 281 residues long: Protein ZAR1-like 1.S (281 aa).

A 3CxxC-type zinc finger spans residues 183-267; it reads QKYGFFQCKD…QDLCGRCKGQ (85 aa).

It belongs to the ZAR1 family. Component of a cytoplasmic ribonucleoprotein complex together with eif4enif1/4E-T and cpeb1. As to expression, expressed in oocytes.

It is found in the cytoplasm. The protein localises to the cytoplasmic ribonucleoprotein granule. In terms of biological role, mRNA-binding protein required for maternal mRNA storage, translation and degradation during oocyte maturation. Controls timing of meiosis during oogenesis. Probably promotes formation of some phase-separated membraneless compartment that stores maternal mRNAs in oocytes: acts by undergoing liquid-liquid phase separation upon binding to maternal mRNAs. Binds to the 3'-UTR of maternal mRNAs, inhibiting their translation. The chain is Protein ZAR1-like 1.S from Xenopus laevis (African clawed frog).